The sequence spans 512 residues: Maturase K (512 aa).

It belongs to the intron maturase 2 family. MatK subfamily.

It localises to the plastid. Its subcellular location is the chloroplast. Usually encoded in the trnK tRNA gene intron. Probably assists in splicing its own and other chloroplast group II introns. The chain is Maturase K from Piper cenocladum (Ant piper).